Here is a 327-residue protein sequence, read N- to C-terminus: D-alanine--D-alanine ligase (327 aa).

The region spanning Lys113–Ala312 is the ATP-grasp domain. ATP is bound at residue Val139–Thr194. Mg(2+)-binding residues include Asp266, Glu279, and Asn281.

This sequence belongs to the D-alanine--D-alanine ligase family. Mg(2+) serves as cofactor. The cofactor is Mn(2+).

The protein localises to the cytoplasm. The catalysed reaction is 2 D-alanine + ATP = D-alanyl-D-alanine + ADP + phosphate + H(+). It functions in the pathway cell wall biogenesis; peptidoglycan biosynthesis. In terms of biological role, cell wall formation. This is D-alanine--D-alanine ligase from Cupriavidus pinatubonensis (strain JMP 134 / LMG 1197) (Cupriavidus necator (strain JMP 134)).